An 864-amino-acid chain; its full sequence is Leucine--tRNA ligase (864 aa).

The 'HIGH' region signature appears at 42–52; the sequence is PYPSGKLHMGH. The 'KMSKS' region signature appears at 624–628; sequence KMSKS. Residue K627 participates in ATP binding.

This sequence belongs to the class-I aminoacyl-tRNA synthetase family.

It is found in the cytoplasm. It carries out the reaction tRNA(Leu) + L-leucine + ATP = L-leucyl-tRNA(Leu) + AMP + diphosphate. The polypeptide is Leucine--tRNA ligase (Burkholderia ambifaria (strain MC40-6)).